Consider the following 2442-residue polypeptide: Histone lysine acetyltransferase CREBBP (2442 aa).

2 disordered regions span residues 1 to 40 (MAENLLDGPPNPKRAKLSSPGFSANDSTDFGSLFDLENDL) and 74 to 168 (RGGS…PATS). Alanine 2 carries the post-translational modification N-acetylalanine. Positions 20-30 (PGFSANDSTDF) are enriched in polar residues. At serine 120 the chain carries Phosphoserine. A compositionally biased stretch (polar residues) spans 125 to 168 (GDSSTPSLPKQAASTSGPTPPASQALNPQAQKQVGLVTSSPATS). Arginine 219 bears the Omega-N-methylarginine mark. The segment at 226-409 (PAPAMQGATS…GKACQVAHCA (184 aa)) is interaction with SRCAP. Low complexity predominate over residues 261-272 (GGMTKMGMTGNT). A disordered region spans residues 261–290 (GGMTKMGMTGNTSPFGQPFSQTGGQPMGAT). The span at 273–284 (SPFGQPFSQTGG) shows a compositional bias: polar residues. The TAZ-type 1 zinc-finger motif lies at 346-432 (DPEKRKLIQQ…RHDCPVCLPL (87 aa)). The Zn(2+) site is built by histidine 362, cysteine 366, cysteine 379, cysteine 384, histidine 393, cysteine 397, cysteine 403, cysteine 408, histidine 417, cysteine 421, cysteine 426, and cysteine 429. Positions 586–665 (GVRKGWHEHV…KIYKIQKELE (80 aa)) constitute a KIX domain. Asymmetric dimethylarginine is present on residues arginine 600 and arginine 624. Position 656 is an N6-acetyllysine (lysine 656). The segment covering 792-825 (FLPQNQFPSSSGAMSVNSVGMGQPATQAGVSQGQ) has biased composition (polar residues). Residues 792-1084 (FLPQNQFPSS…STSPSQPRKK (293 aa)) form a disordered region. 2 stretches are compositionally biased toward pro residues: residues 846–862 (PCPPVTQSPLHPTPPPA) and 874–887 (PTPPGMTPPQPAAP). Positions 894–906 (VSSGQTPTPTPGS) are enriched in polar residues. Low complexity-rich tracts occupy residues 909–930 (SAAQTQSTPTVQAAAQAQVTPQ) and 938–957 (PSVATPQSSQQQPTPVHTQP). A compositionally biased stretch (polar residues) spans 974-989 (PTPSSVTSAETSSQQP). Residue lysine 999 forms a Glycyl lysine isopeptide (Lys-Gly) (interchain with G-Cter in SUMO1) linkage. The span at 1012 to 1022 (AESKGEPRSEM) shows a compositional bias: basic and acidic residues. Lysine 1015 bears the N6-acetyllysine mark. Serine 1031 bears the Phosphoserine mark. Positions 1033–1060 (VKEETDTTEQKSEPMEVEEKKPEVKVEA) are enriched in basic and acidic residues. Residues lysine 1034 and lysine 1057 each participate in a glycyl lysine isopeptide (Lys-Gly) (interchain with G-Cter in SUMO1) cross-link. Residues 1067-1080 (SANGTASQSTSPSQ) are compositionally biased toward polar residues. Serine 1077 bears the Phosphoserine mark. Positions 1086 to 1193 (FKPEELRQAL…EVFEQEIDPV (108 aa)) constitute a Bromo domain. The interval 1125–1171 (DYFDIVKNPMDLSTIKRKLDTGQYQEPWQYVDDVWLMFNNAWLYNRK) is interaction with histone. Positions 1163-1181 (NNAWLYNRKTSRVYKFCSK) are interaction with ASF1A. Lysine 1217 is modified (N6-acetyllysine). In terms of domain architecture, CBP/p300-type HAT spans 1324-1701 (KFSAKRLQTT…MLVELHTQGQ (378 aa)). A phosphoserine; by IKKA mark is found at serine 1383 and serine 1387. An interaction with histone region spans residues 1434 to 1436 (YLD). Residues 1435 to 1437 (LDS), 1447 to 1448 (RT), isoleucine 1494, arginine 1499, and tryptophan 1503 contribute to the acetyl-CoA site. Residues 1548 to 1575 (NVLEESIKELEQEEEERKKEESTAASET) are a coiled coil. The segment covering 1557–1569 (LEQEEEERKKEES) has biased composition (basic and acidic residues). Residues 1557-1616 (LEQEEEERKKEESTAASETPEGSQGDSKNAKKKNNKKTNKNKSSISRANKKKPSMPNVSN) are disordered. An N6-acetyllysine mark is found at lysine 1584, lysine 1592, lysine 1593, lysine 1596, and lysine 1598. A compositionally biased stretch (basic residues) spans 1586–1596 (AKKKNNKKTNK). The ZZ-type zinc-finger motif lies at 1703–1751 (RFVYTCNECKHHVETRWHCTVCEDYDLCINCYNTKSHTHKMVKWGLGLD). 8 residues coordinate Zn(2+): cysteine 1708, cysteine 1711, cysteine 1721, cysteine 1724, cysteine 1730, cysteine 1733, histidine 1739, and histidine 1741. 2 positions are modified to N6-acetyllysine: lysine 1742 and lysine 1745. The residue at position 1764 (serine 1764) is a Phosphoserine. The TAZ-type 2 zinc-finger motif lies at 1766 to 1847 (QESRRLSIQR…KCPVPFCLNI (82 aa)). Residues 1875–1960 (TRNVPQQSLP…QPPPAAVEAA (86 aa)) form a disordered region. 2 stretches are compositionally biased toward pro residues: residues 1901 to 1913 (PQTPQPPAQPQPS) and 1944 to 1955 (PAPPPPAQPPPA). Phosphoserine is present on residues serine 2064, serine 2077, and serine 2080. Residues 2112 to 2421 (NQPGMQPQPG…LNTPNRSALS (310 aa)) form a disordered region. Low complexity-rich tracts occupy residues 2113–2138 (QPGMQPQPGLQSQPGMQPQPGMHQQP), 2197–2217 (QLLQHQQQQQQQQQQQQQQQQ), 2261–2280 (MGQMAAPMGQLGQMGQPGLG), and 2287–2305 (IQQALQQRILQQQQMKQQI). Composition is skewed to polar residues over residues 2315-2327 (SPQQHMLSGQPQA) and 2334-2343 (QIATSLSNQV). The segment covering 2349–2372 (VQSPRPQSQPPHSSPSPRIQPQPS) has biased composition (pro residues). A Phosphoserine modification is found at serine 2351. Polar residues predominate over residues 2411 to 2421 (QLNTPNRSALS).

As to quaternary structure, part of a complex composed of MSX3, CREBBP/CBP AND EP300/p300; the interaction with MSX3 decreases histone acetylation activity. Found in a complex containing NCOA2; NCOA3; IKKA; IKKB and IKBKG. Probably part of a complex with HIF1A and EP300. Interacts with phosphorylated CREB1. Interacts with the C-terminal region of CITED4. The TAZ-type 1 domain interacts with HIF1A. Interacts with SRCAP, CARM1, ELF3, MLLT7/FOXO4, N4BP2, NCOA1, NCOA3, NCOA6, PCAF, DDX5, DDX17, PELP1, PML, SMAD1, SMAD2, SMAD3, SPIB, TRERF1 and ZCCHC12. Interacts with KLF1; the interaction results in acetylation and enhancement of transcriptional activity of KLF1. Interacts with DAXX; the interaction is dependent on CBP sumoylation and results in suppression of the transcriptional activity via recruitment of HDAC2 to DAXX. Interacts with MAF. Interacts with MTDH. Interacts with MAFG; the interaction acetylates MAFG in the basic region and stimulates NFE2 transcriptional activity through increasing its DNA-binding activity. Interacts with IRF2; the interaction acetylates IRF2 and regulates its activity on the H4 promoter. Interacts (via N-terminus) with SS18L1/CREST (via C-terminus). Interacts with IRF3 (when phosphorylated); forming the dsRNA-activated factor 1 (DRAF1), a complex which activates the transcription of the type I interferon genes. Interacts with MECOM. Interacts with CITED1 (via C-terminus) Interacts with GATA1; the interaction results in acetylation and enhancement of transcriptional activity of GATA1. Interacts with FOXO1; the interaction acetylates FOXO1 and inhibits its transcriptional activity. Interacts with NPAS2, CLOCK and BMAL1. Interacts with ASF1A and ASF1B; this promotes histone acetylation. Interacts with acetylated TP53/p53 and with the acetylated histones H3 and H4. Interacts (via transactivation domain and C-terminus) with PCNA; the interaction occurs on chromatin in UV-irradiated damaged cells. Interacts with DHX9 (via N-terminus); this interaction mediates association with RNA polymerase II holoenzyme and stimulates CREB-dependent transcriptional activation. Interacts with SMAD4; negatively regulated by ZBTB7A. Forms a complex with KMT2A and CREB1. Interacts with DDX3X; this interaction may facilitate HNF4A acetylation. Interacts with MSX1; the interaction may inhibit MSX1 autoinactivation. Interacts with MSX3. Interacts with ACSS2. Post-translationally, methylation of the KIX domain by CARM1 blocks association with CREB. This results in the blockade of CREB signaling, and in activation of apoptotic response. In terms of processing, phosphorylated by CHUK/IKKA at Ser-1383 and Ser-1387; these phosphorylations promote cell growth by switching the binding preference of CREBBP from TP53 to NF-kappa-B. Sumoylation negatively regulates transcriptional activity via the recruitment of DAAX. Post-translationally, autoacetylation is required for binding to protein substrates, such as acetylated histones and acetylated TP53/p53. Autoacetylation is induced by glucose and fatty acids. In terms of tissue distribution, expressed in hypothalamus and cortex.

Its subcellular location is the cytoplasm. It is found in the nucleus. It carries out the reaction L-lysyl-[histone] + acetyl-CoA = N(6)-acetyl-L-lysyl-[histone] + CoA + H(+). The catalysed reaction is L-lysyl-[protein] + acetyl-CoA = N(6)-acetyl-L-lysyl-[protein] + CoA + H(+). It catalyses the reaction (S)-lactoyl-CoA + L-lysyl-[protein] = N(6)-[(S)-lactoyl]-L-lysyl-[protein] + CoA + H(+). Its function is as follows. Acetylates histones, giving a specific tag for transcriptional activation. Mediates acetylation of histone H3 at 'Lys-18' and 'Lys-27' (H3K18ac and H3K27ac, respectively). Also acetylates non-histone proteins, like DDX21, FBL, IRF2, MAFG, NCOA3, POLR1E/PAF53 and FOXO1. Binds specifically to phosphorylated CREB and enhances its transcriptional activity toward cAMP-responsive genes. Acts as a coactivator of ALX1. Acts as a circadian transcriptional coactivator which enhances the activity of the circadian transcriptional activators: NPAS2-BMAL1 and CLOCK-BMAL1 heterodimers. Acetylates PCNA; acetylation promotes removal of chromatin-bound PCNA and its degradation during nucleotide excision repair (NER). Acetylates POLR1E/PAF53, leading to decreased association of RNA polymerase I with the rDNA promoter region and coding region. Acetylates DDX21, thereby inhibiting DDX21 helicase activity. Acetylates FBL, preventing methylation of 'Gln-105' of histone H2A (H2AQ104me). In addition to protein acetyltransferase, can use different acyl-CoA substrates, such as lactoyl-CoA, and is able to mediate protein lactylation. Catalyzes lactylation of MRE11 in response to DNA damage, thereby promoting DNA double-strand breaks (DSBs) via homologous recombination (HR). Functions as a transcriptional coactivator for SMAD4 in the TGF-beta signaling pathway. The sequence is that of Histone lysine acetyltransferase CREBBP (Crebbp) from Rattus norvegicus (Rat).